The chain runs to 785 residues: Leucyl aminopeptidase (785 aa).

Substrate is bound by residues Glu-106 and Gly-238–Asn-242. Position 273 (His-273) interacts with Zn(2+). Glu-274 functions as the Proton acceptor in the catalytic mechanism. His-277 and Glu-296 together coordinate Zn(2+).

Belongs to the peptidase M1 family. In terms of assembly, co-immunoprecipitates with the 60 kDa chaperonin. Zn(2+) serves as cofactor. Post-translationally, can be phosphorylated by cell extracts.

Its subcellular location is the cytoplasm. It carries out the reaction Release of an N-terminal amino acid, Xaa-|-Yaa-, in which Xaa is preferably Leu, but may be other amino acids including Pro although not Arg or Lys, and Yaa may be Pro. Amino acid amides and methyl esters are also readily hydrolyzed, but rates on arylamides are exceedingly low.. Preferentially acts as a leucyl-aminopeptidase, although it also has activity against other substrates. This chain is Leucyl aminopeptidase (ape2), found in Saccharolobus solfataricus (strain ATCC 35092 / DSM 1617 / JCM 11322 / P2) (Sulfolobus solfataricus).